Reading from the N-terminus, the 696-residue chain is Methionine synthase reductase (696 aa).

The 144-residue stretch at Phe-4–Trp-147 folds into the Flavodoxin-like domain. Residues Thr-10–Gln-14 and Leu-93–Tyr-124 each bind FMN. Residues Thr-166 to Pro-245 are hinge. A phosphoserine mark is found at Ser-171 and Ser-188. Positions Asp-269–Pro-531 constitute an FAD-binding FR-type domain. Residue Lys-289 coordinates NADP(+). FAD-binding positions include Arg-449 to Ser-452 and Gly-485 to Thr-488. Residues Ser-608 to Arg-609, Tyr-622 to Gln-624, and Asp-657 contribute to the NADP(+) site. Trp-695 is a binding site for FAD.

Forms a multiprotein complex with MMACHC, MMADHC and MTR. It depends on FAD as a cofactor. The cofactor is FMN.

It is found in the cytoplasm. The enzyme catalyses 2 methylcob(III)alamin-[methionine synthase] + 2 S-adenosyl-L-homocysteine + NADP(+) + H(+) = 2 cob(II)alamin-[methionine synthase] + 2 S-adenosyl-L-methionine + NADPH. The catalysed reaction is 2 cob(II)alamin + A + 2 H2O + 2 H(+) = 2 aquacob(III)alamin + AH2. Key enzyme in methionine and folate homeostasis responsible for the reactivation of methionine synthase (MTR/MS) activity by catalyzing the reductive methylation of MTR-bound cob(II)alamin. Cobalamin (vitamin B12) forms a complex with MTR to serve as an intermediary in methyl transfer reactions that cycles between MTR-bound methylcob(III)alamin and MTR bound-cob(I)alamin forms, and occasional oxidative escape of the cob(I)alamin intermediate during the catalytic cycle leads to the inactive cob(II)alamin species. The processing of cobalamin in the cytosol occurs in a multiprotein complex composed of at least MMACHC, MMADHC, MTRR and MTR which may contribute to shuttle safely and efficiently cobalamin towards MTR in order to produce methionine. Also necessary for the utilization of methyl groups from the folate cycle, thereby affecting transgenerational epigenetic inheritance. Also acts as a molecular chaperone for methionine synthase by stabilizing apoMTR and incorporating methylcob(III)alamin into apoMTR to form the holoenzyme. Also serves as an aquacob(III)alamin reductase by reducing aquacob(III)alamin to cob(II)alamin; this reduction leads to stimulation of the conversion of apoMTR and aquacob(III)alamin to MTR holoenzyme. The chain is Methionine synthase reductase from Mus musculus (Mouse).